The following is a 1136-amino-acid chain: Type I inositol polyphosphate 5-phosphatase 13 (1136 aa).

WD repeat units follow at residues 147 to 185 (ETQTGRFLRNIACTETQLWAGQENGIRFWNLEDAYEAGC), 205 to 244 (VTTSPTMCLVADQSNKLLWSGHKDGKIRAWKMDQSSVSHD), 259 to 297 (AHRGPVNSIVISSYGDMWSCSEGGVIKIWPWDTLEKSLL), 436 to 475 (EDTRKTEAIVLAVDGTIWTGSISGLIVQWDGNGNRLRDVN), and 515 to 552 (SHNEPVIKLAAGGGFIFSLATHGGVRGWYVTSPGPLDN). 2 catalytic regions span residues 782–798 (DMVAFFGDFNYRLFGIT) and 861–876 (KKRIPAWCDRVIYRDT). K940 is covalently cross-linked (Glycyl lysine isopeptide (Lys-Gly) (interchain with G-Cter in ubiquitin)). A disordered region spans residues 1104–1136 (KNLGGSRRYPTDITRNGSTRPRTEDSVRRGKSR). Residues 1124 to 1136 (PRTEDSVRRGKSR) are compositionally biased toward basic and acidic residues.

This sequence belongs to the inositol polyphosphate 5-phosphatase family. In terms of assembly, interacts with KIN10, but not with PHOT1. The cofactor is Mg(2+). In terms of tissue distribution, expressed in young seedlings and flowers. Highly expressed in anther and pollen grains, but not in pistils. Not detected in maturated roots, stems and rosette leaves.

The protein localises to the nucleus. It catalyses the reaction 1D-myo-inositol 1,4,5-trisphosphate + H2O = 1D-myo-inositol 1,4-bisphosphate + phosphate. In terms of biological role, converts inositol 1,4,5-trisphosphate (Ins(1,4,5)P3) to inositol 1,4-bisphosphate. Modulates cotyledon vein development through regulating auxin homeostasis. Involved in blue light responses. Decreases the amount of KIN10 degraded by the proteasome under low nutrient conditions. Participates with IP5P12 in the control of Ins(1,4,5)P3/Ca(2+) levels that is crucial for maintaining pollen dormancy and regulating early germination of pollen. May modulate auxin transport by regulating vesicle trafficking and thereby plays a role in root gravitropism. The protein is Type I inositol polyphosphate 5-phosphatase 13 of Arabidopsis thaliana (Mouse-ear cress).